A 294-amino-acid chain; its full sequence is Uracil-DNA glycosylase (294 aa).

Asp139 functions as the Proton acceptor in the catalytic mechanism.

This sequence belongs to the uracil-DNA glycosylase (UDG) superfamily. UNG family.

It localises to the host nucleus. The catalysed reaction is Hydrolyzes single-stranded DNA or mismatched double-stranded DNA and polynucleotides, releasing free uracil.. Its function is as follows. Excises uracil residues from the DNA which can arise as a result of misincorporation of dUMP residues by DNA polymerase or deamination of cytosines. Therefore may reduce deleterious uracil incorporation into the viral genome, particularly in terminally differentiated cells which lack DNA repair enzymes. The sequence is that of Uracil-DNA glycosylase (UL2) from Human herpesvirus 2 (strain 333) (HHV-2).